Here is a 778-residue protein sequence, read N- to C-terminus: Aerobic respiration control sensor protein ArcB (778 aa).

The Cytoplasmic segment spans residues 1–25 (MKQIRLLAQYYVDLMMKLGLVRFSM). A helical membrane pass occupies residues 26–46 (LLALALVVLAIVVQMAVTMVL). Residues 47 to 57 (HGQVESIDVIR) are Periplasmic-facing. A helical transmembrane segment spans residues 58–78 (SIFFGLLITPWAVYFLSVVVE). The Cytoplasmic portion of the chain corresponds to 79–778 (QLEESRQRLS…KAWVAKATKK (700 aa)). Residues 153–223 (QSSFLRSFLD…ETDEKVFRHN (71 aa)) form the PAS domain. The PAC domain occupies 226-278 (LTYEQWLDYPDGRKACFEIRKVPYYDRVGKRHGLMGFGRDITERKRYQDALER). The Histidine kinase domain occupies 289-507 (TISHELRTPL…TFTLTIHAPS (219 aa)). At H292 the chain carries Phosphohistidine; by autocatalysis. One can recognise a Response regulatory domain in the interval 527–643 (NVLLVEDIEL…ALTAMIKKFW (117 aa)). D576 is modified (4-aspartylphosphate). The HPt domain maps to 678–771 (GPKLITDGLA…RHDVEVLKAW (94 aa)). Position 717 is a phosphohistidine (H717).

Activation requires a sequential transfer of a phosphate group from a His in the primary transmitter domain, to an Asp in the receiver domain and to a His in the secondary transmitter domain.

The protein resides in the cell inner membrane. It carries out the reaction ATP + protein L-histidine = ADP + protein N-phospho-L-histidine.. Its function is as follows. Member of the two-component regulatory system ArcB/ArcA. Sensor-regulator protein for anaerobic repression of the arc modulon. Activates ArcA via a four-step phosphorelay. ArcB can also dephosphorylate ArcA by a reverse phosphorelay involving His-717 and Asp-576. The polypeptide is Aerobic respiration control sensor protein ArcB (arcB) (Escherichia coli O157:H7).